A 91-amino-acid chain; its full sequence is Long neurotoxin OH-56 (91 aa).

Positions 1 to 21 are cleaved as a signal peptide; the sequence is MKTLLLTLVVVTIMCLDLGYT. 5 cysteine pairs are disulfide-bonded: cysteine 24–cysteine 42, cysteine 35–cysteine 63, cysteine 48–cysteine 52, cysteine 67–cysteine 78, and cysteine 79–cysteine 84.

It belongs to the three-finger toxin family. Long-chain subfamily. Type II alpha-neurotoxin sub-subfamily. In terms of tissue distribution, expressed by the venom gland.

It is found in the secreted. In terms of biological role, binds with high affinity to muscular (alpha-1/CHRNA1) and neuronal (alpha-7/CHRNA7) nicotinic acetylcholine receptor (nAChR) and inhibits acetylcholine from binding to the receptor, thereby impairing neuromuscular and neuronal transmission. In Ophiophagus hannah (King cobra), this protein is Long neurotoxin OH-56.